Here is a 412-residue protein sequence, read N- to C-terminus: Probable histone-binding protein rba-1 (412 aa).

WD repeat units lie at residues 117-157, 169-209, 219-259, 262-302, 306-346, and 365-405; these read NHPG…SEPK, GHEG…TISG, GHSS…PQLT, GHTA…KKMY, HHND…DPSS, and GHTG…VSSE.

The protein belongs to the WD repeat RBAP46/RBAP48/MSI1 family. Binds directly to helix 1 of the histone fold of histone H4, a region that is not accessible when H4 is in chromatin. Interacts with zft-11; the interaction is required to suppress the activation of non-neuronal genes in neurons.

The protein resides in the nucleus. Functionally, core histone-binding subunit that may target chromatin assembly factors, chromatin remodeling factors and histone deacetylases to their histone substrates in a manner that is regulated by nucleosomal DNA. Plays a role in regulating cell cycle progression. Required to repress the induction of vulval development by Ras signaling. In association with the zinc finger protein ztf-11, negatively regulates the expression of non-neuronal genes during neurogenesis. This is Probable histone-binding protein rba-1 from Caenorhabditis elegans.